The sequence spans 1783 residues: Chitin synthase A (1783 aa).

Asn-159, Asn-637, Asn-652, Asn-664, and Asn-669 each carry an N-linked (GlcNAc...) asparagine glycan. 2 consecutive transmembrane segments (helical) span residues 745–765 (IWVAIVWFWTFWIPSPLLSFV) and 781–801 (LTLVWFIVLINAAIVFWIVAF). N-linked (GlcNAc...) asparagine glycans are attached at residues Asn-1014 and Asn-1018. The chain crosses the membrane as a helical span at residues 1051–1071 (IMLAMTIILCSVILVKFLAAL). N-linked (GlcNAc...) asparagine glycosylation occurs at Asn-1416. The next 3 helical transmembrane spans lie at 1441–1461 (FVVFIDLFGTIILPATTIYLG), 1474–1494 (FPIISIIMLAAVYGLQALIFI), and 1502–1522 (IGWMIIYIMAFPIYSFALPIY). N-linked (GlcNAc...) asparagine glycosylation is found at Asn-1529 and Asn-1617. Residues 1659-1724 (THDINRGQTP…SFDFQRGNMQ (66 aa)) form a disordered region. Over residues 1664–1688 (RGQTPFQDFPSSRPSVSNLRGQANP) the composition is skewed to polar residues. Residue Asn-1695 is glycosylated (N-linked (GlcNAc...) asparagine). One can recognise a DEK-C domain in the interval 1725–1781 (GPDDSMIIEAIQGVLREVDLDTVTKKQVRALVEQRLQTGLVGERRTFMDRQIDNELA).

This sequence belongs to the chitin synthase family. Class V subfamily.

It localises to the cell membrane. The catalysed reaction is [(1-&gt;4)-N-acetyl-beta-D-glucosaminyl](n) + UDP-N-acetyl-alpha-D-glucosamine = [(1-&gt;4)-N-acetyl-beta-D-glucosaminyl](n+1) + UDP + H(+). Its function is as follows. Polymerizes chitin, a structural polymer of the cell wall and septum, by transferring the sugar moiety of UDP-GlcNAc to the non-reducing end of the growing chitin polymer. Responsible for about 29% of the chitin in conidial walls, is essential for conidial wall strength in media with high water potential and contributes to strength of hyphal tips. This Colletotrichum graminicola (Maize anthracnose fungus) protein is Chitin synthase A.